The primary structure comprises 247 residues: Adenylate kinase (247 aa).

42 to 47 (GAGKGT) is an ATP binding site. Residues 62 to 91 (ATGDMLRAQVTAKTELGVQAKKIMDQGGLV) are NMP. AMP-binding positions include Thr-63, Arg-68, 89-91 (GLV), 118-121 (GFPR), and Gln-125. Residues 159 to 196 (GRLVHPASGRSYHKLFNPPKKEMTDDQTGEPLVQRSDD) are LID. Residues Arg-160 and 169–170 (SY) each bind ATP. The tract at residues 169–191 (SYHKLFNPPKKEMTDDQTGEPLV) is disordered. Positions 193 and 204 each coordinate AMP. Gln-232 is a binding site for ATP.

This sequence belongs to the adenylate kinase family. AK2 subfamily. As to quaternary structure, monomer.

The protein localises to the cytoplasm. The protein resides in the cytosol. It localises to the mitochondrion intermembrane space. It catalyses the reaction AMP + ATP = 2 ADP. In terms of biological role, catalyzes the reversible transfer of the terminal phosphate group between ATP and AMP. Plays an important role in cellular energy homeostasis and in adenine nucleotide metabolism. Adenylate kinase activity is critical for regulation of the phosphate utilization and the AMP de novo biosynthesis pathways. In Meyerozyma guilliermondii (strain ATCC 6260 / CBS 566 / DSM 6381 / JCM 1539 / NBRC 10279 / NRRL Y-324) (Yeast), this protein is Adenylate kinase.